Reading from the N-terminus, the 241-residue chain is Zinc finger CCHC domain-containing protein 17 (241 aa).

The 73-residue stretch at 16 to 88 (YTIFQGEVAM…DRIKVSLSMK (73 aa)) folds into the S1 motif domain. Phosphoserine is present on Ser-114. A CCHC-type zinc finger spans residues 131–148 (TTCKKCGCKGHFAKDCFM). Lys-144 carries the N6-acetyllysine modification. The segment at 160–241 (EEEEEKEEAK…KKKHKKKHKE (82 aa)) is disordered. Basic and acidic residues predominate over residues 166–178 (EEAKAEGLEKPDP). The span at 182–198 (SSRKRKKEKKKKKHRDR) shows a compositional bias: basic residues. Ser-183 carries the phosphoserine modification. Over residues 211-225 (DTGKKARHSSKDSKA) the composition is skewed to basic and acidic residues. Basic residues predominate over residues 226–241 (TKKKKKKKKHKKKHKE).

In terms of assembly, interacts with PNN. Associates with the 60S ribosomal subunit. Expressed in liver, brain, heart, kidney testis, stomach, small intestine, skin, thymus, uterus, placenta, spleen, lung and skeletal muscle.

The protein localises to the nucleus. The protein resides in the nucleolus. This Mus musculus (Mouse) protein is Zinc finger CCHC domain-containing protein 17 (Zcchc17).